We begin with the raw amino-acid sequence, 94 residues long: Large ribosomal subunit protein uL23c (94 aa).

The protein belongs to the universal ribosomal protein uL23 family. In terms of assembly, part of the 50S ribosomal subunit.

It localises to the plastid. The protein localises to the chloroplast. Binds to 23S rRNA. The sequence is that of Large ribosomal subunit protein uL23c (rpl23) from Tupiella akineta (Green alga).